Consider the following 251-residue polypeptide: Auxin-responsive protein IAA29 (251 aa).

Positions 3–7 match the EAR-like (transcriptional repression) motif; it reads LDLGL. Residues 159 to 246 enclose the PB1 domain; the sequence is SMYVKVKMDG…SIIRDRPCAY (88 aa).

It belongs to the Aux/IAA family. Homodimers and heterodimers.

It localises to the nucleus. In terms of biological role, aux/IAA proteins are short-lived transcriptional factors that function as repressors of early auxin response genes at low auxin concentrations. Repression is thought to result from the interaction with auxin response factors (ARFs), proteins that bind to the auxin-responsive promoter element (AuxRE). Formation of heterodimers with ARF proteins may alter their ability to modulate early auxin response genes expression. The chain is Auxin-responsive protein IAA29 (IAA29) from Arabidopsis thaliana (Mouse-ear cress).